The sequence spans 171 residues: Probable chemoreceptor glutamine deamidase CheD 1 (171 aa).

Residues 1 to 18 (MTRTTGAAPDRAAPAAGE) show a composition bias toward low complexity. Residues 1-23 (MTRTTGAAPDRAAPAAGETPGGG) are disordered.

The protein belongs to the CheD family.

The enzyme catalyses L-glutaminyl-[protein] + H2O = L-glutamyl-[protein] + NH4(+). Its function is as follows. Probably deamidates glutamine residues to glutamate on methyl-accepting chemotaxis receptors (MCPs), playing an important role in chemotaxis. The chain is Probable chemoreceptor glutamine deamidase CheD 1 from Anaeromyxobacter dehalogenans (strain 2CP-C).